A 69-amino-acid chain; its full sequence is MKTQFAILMIAVVLMQMLVQTEGGILGKIWEGVKSLIGKRGLKKLDQLDDTFDSDLSDADVKLLREMFK.

The first 23 residues, 1–23 (MKTQFAILMIAVVLMQMLVQTEG), serve as a signal peptide directing secretion. I37 bears the Isoleucine amide mark. A propeptide spanning residues 41–69 (GLKKLDQLDDTFDSDLSDADVKLLREMFK) is cleaved from the precursor.

This sequence belongs to the non-disulfide-bridged peptide (NDBP) superfamily. Short antimicrobial peptide (group 4) family. In terms of tissue distribution, expressed by the venom gland.

Its subcellular location is the secreted. It localises to the target cell membrane. Amphipathic peptide with antimicrobial activity. Shows antifungal activity with MIC values ranging from 25 to 200 uM. Does not show antifungal activity against Candida glabrata (ATCC90030) and Candida parapsilosis (ATCC22019) (MIC&gt;400 uM). The polypeptide is Amphipathic peptide OcyC2 (Opisthacanthus cayaporum (South American scorpion)).